A 495-amino-acid polypeptide reads, in one-letter code: Omega-crystallin (495 aa).

The protein belongs to the aldehyde dehydrogenase family. In terms of tissue distribution, lens.

Omega-crystallins are structural components of squids and octopi eye lens. Contains relatively little if any DHAL activity. The sequence is that of Omega-crystallin from Nototodarus sloanii (Wellington flying squid).